Here is a 177-residue protein sequence, read N- to C-terminus: Large ribosomal subunit protein uL6 (177 aa).

It belongs to the universal ribosomal protein uL6 family. As to quaternary structure, part of the 50S ribosomal subunit.

In terms of biological role, this protein binds to the 23S rRNA, and is important in its secondary structure. It is located near the subunit interface in the base of the L7/L12 stalk, and near the tRNA binding site of the peptidyltransferase center. This chain is Large ribosomal subunit protein uL6, found in Buchnera aphidicola subsp. Acyrthosiphon kondoi (Acyrthosiphon kondoi symbiotic bacterium).